Reading from the N-terminus, the 324-residue chain is MRSMSLWMLIGPVTGIATWASLRYAATTTTSSTAAASTRMGLAPVIALSHGGGPLPLLGDPGHKSIIHSLSHRIPKILSLNDPDRRPRAIILITAHWSTAAPTISGAANPDLIYDYYGFPPETYELKYPARGDPGIAAEAAAAFRAEGLGDVVVDPGRGWDHGVFVPMTLVRPEADIPIVQMSVLASEDPTSHLRMGRALRALRAENIAIVGSGFASFHNLRAMMAMRSSAGSRNPEGARIQAISREWNSALTDVVDKNPWQGLEGWRSLPGADLMHPPRGGEHFMPLIACAGAAHEEEKVRWYTDEYLGVDIYTYYWGGSDVE.

The signal sequence occupies residues 1-25 (MRSMSLWMLIGPVTGIATWASLRYA). Zn(2+) contacts are provided by histidine 50, histidine 96, and histidine 284.

The protein belongs to the DODA-type extradiol aromatic ring-opening dioxygenase family. Monomer. The cofactor is Zn(2+).

Its function is as follows. Dioxygenase; part of the gene cluster that mediates the biosynthesis of the tetramic acids Sch210971 and Sch210972, potential anti-HIV fungal natural product that contain a decalin core. The PKS module of tasS together with the enoylreductase tasC catalyze the formation of the polyketide unit which is then conjugated to 4-hydroxyl-4-methyl glutamate (HMG) by the condensation domain of the tasS NRPS module. One unique structural feature of Sch210971 and Sch210972 is the tetramic acid motif proposed to be derived from the non-proteinogenic amino acid HMG, by a Dieckmann-type condensation catalyzed by the reductase domain of tasS. The aldolase tasA catalyzes the aldol condensation of 2 molecules of pyruvic acid to yield the intermediate 4-hydroxyl-4-methyl-2-oxoglutarate (HMOG), which can then be stereoselectively transaminated, may be by tasG, to form HMG. The Diels-Alderase tas3 then uses the Dieckmann product of tasS as substrate and catalyzes the Diels-Alder cycloaddition to form the decalin ring of Sch210971 and Sch210972. This chain is Dioxygenase tasH, found in Hapsidospora irregularis.